The following is a 478-amino-acid chain: Ketoisovalerate oxidoreductase subunit VorA (478 aa).

Heterotrimer of the VorA, VorB and VorC subunits.

This Methanothermobacter marburgensis (strain ATCC BAA-927 / DSM 2133 / JCM 14651 / NBRC 100331 / OCM 82 / Marburg) (Methanobacterium thermoautotrophicum) protein is Ketoisovalerate oxidoreductase subunit VorA (vorA).